A 165-amino-acid chain; its full sequence is Cathelicidin-7 (165 aa).

The N-terminal stretch at 1-29 is a signal peptide; the sequence is METQRASFSLGRSSLWLLLLGLVVPSASA. The propeptide occupies 30–130; it reads QDLSYREAVL…FDITCNNIQS (101 aa). 2 disulfides stabilise this stretch: C86-C97 and C108-C125. R164 is modified (arginine amide).

Belongs to the cathelicidin family. In terms of tissue distribution, expressed in bone marrow myeloid cells, spleen and testis.

It is found in the secreted. In terms of biological role, exerts a potent antimicrobial activity. The chain is Cathelicidin-7 (CATHL7) from Bos taurus (Bovine).